The following is a 297-amino-acid chain: Ribosomal RNA small subunit methyltransferase H (297 aa).

Residues 37 to 39 (GGH), Glu-56, Phe-87, Asp-102, and His-109 contribute to the S-adenosyl-L-methionine site.

This sequence belongs to the methyltransferase superfamily. RsmH family.

The protein localises to the cytoplasm. The enzyme catalyses cytidine(1402) in 16S rRNA + S-adenosyl-L-methionine = N(4)-methylcytidine(1402) in 16S rRNA + S-adenosyl-L-homocysteine + H(+). Specifically methylates the N4 position of cytidine in position 1402 (C1402) of 16S rRNA. The protein is Ribosomal RNA small subunit methyltransferase H of Borrelia duttonii (strain Ly).